Consider the following 175-residue polypeptide: RNA pyrophosphohydrolase (175 aa).

One can recognise a Nudix hydrolase domain in the interval 6 to 149 (GYRPNVGIVI…KRDVYRRVMK (144 aa)). The Nudix box signature appears at 38 to 59 (GGINAGETAEQAMYRELFEEVG).

It belongs to the Nudix hydrolase family. RppH subfamily. The cofactor is a divalent metal cation.

Accelerates the degradation of transcripts by removing pyrophosphate from the 5'-end of triphosphorylated RNA, leading to a more labile monophosphorylated state that can stimulate subsequent ribonuclease cleavage. This Sodalis glossinidius (strain morsitans) protein is RNA pyrophosphohydrolase.